A 331-amino-acid polypeptide reads, in one-letter code: uncharacterized protein (331 aa).

Pentapeptide repeat domains are found at residues 20–59 (LKLPGINLEAADLIGIVLNEADLRGANLLFCYLNRANLGQ), 60–99 (ANLVAANLSGASLNQADLAGADLRSANFHGAMLQGAILRD), 100–139 (SDMTLATLQDTNLIGADLRGADLSGATLTGACLRGANMRQ), 151–190 (AILGRADLQGANMKGVDLSRADLSYANLKEANLRDVDLRK), 191–230 (ADLSYANLKGALLTDANLSGAKLNGADLQNANLMRAKISE), 231–270 (AEMTAVNCQGAIMTHVNLNRTNLTGSNLSFTRMNSADLSR), and 271–310 (ANLTKANLQEAELIEAFFARANLTEANFINANLVRADLMS).

This is an uncharacterized protein from Synechocystis sp. (strain ATCC 27184 / PCC 6803 / Kazusa).